The sequence spans 287 residues: POU domain class 2-associating factor 2 (287 aa).

Positions 10 to 32 (KRVYQGVRVKHTVKDLLAEKRSR) constitute an OCA domain. Disordered regions lie at residues 24–51 (DLLA…PPFI), 161–199 (TVPD…TQHR), and 247–279 (PKVG…MAWG). Polar residues-rich tracts occupy residues 33 to 49 (QTSN…SQPP) and 180 to 199 (LPPS…TQHR).

This sequence belongs to the POU2AF family. As to quaternary structure, interacts with POU2F3 (via the POU domain) in a DNA-dependent manner; this interaction recruits POU2AF2 to chromatin and increases POU2F3 transactivation activity. As to expression, expressed in tuft cells of the small intestine, trachea, thymus, and colon.

The protein resides in the cytoplasm. Its subcellular location is the cytosol. The protein localises to the nucleus. Functionally, transcriptional coactivator of POU2F3. This complex drives the development of tuft cells, a rare chemosensory cells that coordinate immune and neural functions within mucosal epithelial tissues. The protein is POU domain class 2-associating factor 2 of Mus musculus (Mouse).